The chain runs to 199 residues: Recombination protein RecR (199 aa).

A C4-type zinc finger spans residues 57–72 (CRQCRTLTEDELCPQC). A Toprim domain is found at 80 to 174 (SLLCVVQSPV…TISRIAHGVP (95 aa)).

Belongs to the RecR family.

May play a role in DNA repair. It seems to be involved in an RecBC-independent recombinational process of DNA repair. It may act with RecF and RecO. This Stutzerimonas stutzeri (strain A1501) (Pseudomonas stutzeri) protein is Recombination protein RecR.